Reading from the N-terminus, the 185-residue chain is MIRLASTSETRAKLLQDTGIEFIQSPVDFDEEELLKVYKNPRDFVCAAARGKMEAAVEKYGLEIPIVAADTVVAVSDEILRKAKDEEEARKILQKQSGNKVDIITCMIYKDKEKTVEDLDVTSYIFAPFDEEDLQNYLKSGQWRGKAGACMVEGFCKKYIKEVLGRESTAMGLQVERLAEIAKDL.

Asp70 serves as the catalytic Proton acceptor.

It belongs to the Maf family. Requires a divalent metal cation as cofactor.

It is found in the cytoplasm. It carries out the reaction a ribonucleoside 5'-triphosphate + H2O = a ribonucleoside 5'-phosphate + diphosphate + H(+). The enzyme catalyses a 2'-deoxyribonucleoside 5'-triphosphate + H2O = a 2'-deoxyribonucleoside 5'-phosphate + diphosphate + H(+). In terms of biological role, nucleoside triphosphate pyrophosphatase. May have a dual role in cell division arrest and in preventing the incorporation of modified nucleotides into cellular nucleic acids. The protein is Nucleoside triphosphate pyrophosphatase of Nitratiruptor sp. (strain SB155-2).